The primary structure comprises 148 residues: uncharacterized protein (148 aa).

In terms of domain architecture, HTH asnC-type spans 2-63; the sequence is LDELDKRILY…LINPFKAGYE (62 aa). Residues 21–40 constitute a DNA-binding region (H-T-H motif); the sequence is YSEIARILGVPESTVRVRVK.

This is an uncharacterized protein from Pyrococcus furiosus (strain ATCC 43587 / DSM 3638 / JCM 8422 / Vc1).